Reading from the N-terminus, the 59-residue chain is Mu-conotoxin SrVA (59 aa).

The signal sequence occupies residues 1 to 22 (MRCLPVFVILLLLIASAPSVDA). The propeptide occupies 23 to 44 (QLKTKDDVPLASFHDNAKGTQH). Intrachain disulfides connect Cys51–Cys58 and Cys52–Cys59.

It belongs to the conotoxin T superfamily. In terms of tissue distribution, expressed by the venom duct.

It is found in the secreted. Functionally, mu-conotoxins block voltage-gated sodium channels. This peptide inhibits the cardiac sodium channel hNav1.5/SCN5A (33% inhibition at 200 nM, 50% at 400 nM, and 55% at 600 nM). Does not interfere with the voltage-dependence of activation, but affects the voltage-dependence of inactivation of hNav1.5. In vivo, intracranial injection into 9-day-old mice causes transient symptoms, including extension of the body and clockwise and counter-clockwise turns, that last 3 to 4 minutes. Intracranial injection into 16-day-old mice, causes transient symptoms, including agitated breathing and occasional turning followed by scratching and grooming behavior, that last for 15-19 minutes. This Conus spurius (Alphabet cone) protein is Mu-conotoxin SrVA.